Consider the following 423-residue polypeptide: MSTKQVTCRYFLHGVCREGSRCLFSHDLNNSKPSTICKFYQRGVCAYGERCRYDHIKPSSRGGGGGAPEDQAGGGGAGGGGAGIGGAGGGPSVRGGMKKNLVLRDRVLGVDRVDRMFGAPADSMWSDVSTAAAPHSYVEAIRTGLDASAQDQATPPVCGPSQNLPQLCPYAANGHCFYEENCTYLHGDLCEVCGLQVLHPHDSEQRRAHEKMCLAAFEADMEKAFAAQLSQDKVCSICMEVVVQKANPSDRRFGILSSCCHTFCLACIRKWRCTRTFSNTIIKSCPECRVVSEFVIPSVYWVEDQEDKDHLIDLFKSGVSKKACKYFDQGRGSCPFGGKCLYLHAFPDGTRAEPDRPRKQLSSEGNVRFMNSVRLWDFIEEREQRSVPPLPALDDDMAELRELFMQMSGPSHDGPETPPTADQ.

2 C3H1-type zinc fingers span residues 2–29 and 31–58; these read STKQVTCRYFLHGVCREGSRCLFSHDLN and SKPSTICKFYQRGVCAYGERCRYDHIKP. Residues 59–90 are disordered; the sequence is SSRGGGGGAPEDQAGGGGAGGGGAGIGGAGGG. A compositionally biased stretch (gly residues) spans 61-90; the sequence is RGGGGGAPEDQAGGGGAGGGGAGIGGAGGG. The C3H1-type 3 zinc-finger motif lies at 162–189; that stretch reads QNLPQLCPYAANGHCFYEENCTYLHGDL. Positions 190-219 are makorin-type Cys-His; sequence CEVCGLQVLHPHDSEQRRAHEKMCLAAFEA. An RING-type zinc finger spans residues 235–289; the sequence is CSICMEVVVQKANPSDRRFGILSSCCHTFCLACIRKWRCTRTFSNTIIKSCPECR. Residues 318-347 form a C3H1-type 4 zinc finger; it reads GVSKKACKYFDQGRGSCPFGGKCLYLHAFP.

It is found in the cytoplasm. The protein resides in the nucleus. The catalysed reaction is S-ubiquitinyl-[E2 ubiquitin-conjugating enzyme]-L-cysteine + [acceptor protein]-L-lysine = [E2 ubiquitin-conjugating enzyme]-L-cysteine + N(6)-ubiquitinyl-[acceptor protein]-L-lysine.. It participates in protein modification; protein ubiquitination. In terms of biological role, E3 ubiquitin ligase catalyzing the covalent attachment of ubiquitin moieties onto substrate proteins. Inhibits neurogenesis and axis formation during embryonic development by modulating the phosphatidylinositol 3-kinase (PI3K) pathway. Acts downstream of PI3K and akt1 to up-regulate gsk3b mRNA expression. The polypeptide is E3 ubiquitin-protein ligase makorin-2 (mkrn2) (Seriola quinqueradiata (Five-ray yellowtail)).